The primary structure comprises 441 residues: Ubiquitin carboxyl-terminal hydrolase MINDY-3 (441 aa).

Cys51 acts as the Nucleophile in catalysis. The Proton acceptor role is filled by His284.

The protein belongs to the MINDY deubiquitinase family. FAM188 subfamily.

It localises to the nucleus. The enzyme catalyses Thiol-dependent hydrolysis of ester, thioester, amide, peptide and isopeptide bonds formed by the C-terminal Gly of ubiquitin (a 76-residue protein attached to proteins as an intracellular targeting signal).. In terms of biological role, hydrolase that can remove 'Lys-48'-linked conjugated ubiquitin from proteins. This chain is Ubiquitin carboxyl-terminal hydrolase MINDY-3 (mindy3), found in Xenopus tropicalis (Western clawed frog).